Consider the following 757-residue polypeptide: MDVNPTLLFLKVPAQNAISTTFPYTGDPPYSHGTGTGYTMDTVNRTHQYSERGRWTTNTETGALQLNPIDGPLPEDHEPSGYAQTDCVLEAMAFLEESHPGIFENSCIETMEVVQQTRVDKLTQGRQTYDWTLNRNQPAATALANTIEVFRSNGLTANESGRLIDFLKDVMESMNKEEMGITTHFQRKRRVRDNMTKKMVTQRTIGKRKQRLNKRSYLIRALTLNTMTKDAERGKLKRRAIATPGMQIRGFVYFVETLARSICEKLEQSGLPVGGNEKKAKLANVVRKMMTNSQDTELSFTITGDNTKWNENQNPRMFLAMITYMTRNQPEWFRNVLSIAPIMFSNKMARLGKGYMFESKSMKLRTQIPAEMLASIDLKYFNDSTRKKIEKIRPLLIEGTASLSPGMMMGMFNMLSTVLGVSILNLGQKRYTKTTYWWDGLQSSDDFALIVNAPNHEGIQAGVDRFYRTCKLLGINMSKKKSYINRTGTFEFTSFFYRYGFVANFSMELPSFGVSGINESADMSIGVTVIKNNMINNDLGPATAQMALQLFIKDYRYTYRCHRGDTQIQTRRSFEIKKLWEQTRSKAGLLVSDGGPNLYNIRNLHIPEVCLKWELMDEDYQGRLCNPLNPFVSHKEIESMNNAVMMPAHGPAKNMEYDAVATTHSWIPKRNRSILNTSQRGILEDEQMYQRCCNLFEKFFPSSSYRRPVGISSMVEAMVSRARIDARIDFESGRIKKEEFTEIMKICSTIEELRRQK.

Short sequence motifs (nuclear localization signal) lie at residues arginine 187–methionine 195 and arginine 203–serine 216. Residues arginine 249 to glutamate 256 form a promoter-binding site region. One can recognise a RdRp catalytic domain in the interval valine 286 to tyrosine 483.

Belongs to the influenza viruses polymerase PB1 family. In terms of assembly, influenza RNA polymerase is composed of three subunits: PB1, PB2 and PA. Interacts (via N-terminus) with PA (via C-terminus). Interacts (via C-terminus) with PB2 (via N-terminus); this interaction is essential for transcription initiation. Interacts (via C-terminus) with human PKP2 (via N-terminus); the interaction competitively inhibits the interaction between the RNA polymerase subunits PB1 and PB2. Post-translationally, phosphorylated by host PRKCA.

It localises to the host nucleus. Its subcellular location is the host cytoplasm. It catalyses the reaction RNA(n) + a ribonucleoside 5'-triphosphate = RNA(n+1) + diphosphate. In terms of biological role, RNA-dependent RNA polymerase which is responsible for replication and transcription of virus RNA segments. The transcription of viral mRNAs occurs by a unique mechanism called cap-snatching. 5' methylated caps of cellular mRNAs are cleaved after 10-13 nucleotides by PA. In turn, these short capped RNAs are used as primers by PB1 for transcription of viral mRNAs. During virus replication, PB1 initiates RNA synthesis and copy vRNA into complementary RNA (cRNA) which in turn serves as a template for the production of more vRNAs. The sequence is that of RNA-directed RNA polymerase catalytic subunit from Influenza A virus (strain A/Henry/1936 H1N1).